The sequence spans 1712 residues: Collagen alpha-2(IV) chain (1712 aa).

The N-terminal stretch at 1–25 (MGRDQRAVAGPALRRWLLLGTVTVG) is a signal peptide. Residues 26–183 (FLAQSVLAGV…LPKEERDRYR (158 aa)) constitute a propeptide, N-terminal propeptide (7S domain). Disordered regions lie at residues 60–237 (RGQP…GFYG), 302–448 (GLRG…PDGF), 507–640 (INGE…DAGL), 690–906 (GLPG…SPGF), and 1157–1480 (TGPP…GLPG). Residues 68–84 (PQGYNGPPGLQGFPGLQ) are compositionally biased toward low complexity. Gly residues predominate over residues 121-130 (GHPGQGGPRG). Asn138 carries an N-linked (GlcNAc...) asparagine glycan. The segment covering 140-153 (TQGDSGPQGPPGSE) has biased composition (low complexity). A compositionally biased stretch (basic and acidic residues) spans 175 to 186 (PKEERDRYRGEP). A triple-helical region region spans residues 184–1484 (GEPGEPGLVG…SPGLPGMPGR (1301 aa)). Composition is skewed to pro residues over residues 215–224 (RPGPPGPPGP) and 433–445 (PPGPPGLPGPPGP). 2 stretches are compositionally biased toward basic and acidic residues: residues 511–520 (PGRKGDRGDP) and 571–582 (KGDDGSPGRDGL). 2 stretches are compositionally biased toward low complexity: residues 628 to 640 (LKGQRGFPGDAGL) and 698 to 710 (TGAKGLRGIPGFA). The span at 711-720 (GADGGPGPRG) shows a compositional bias: gly residues. The segment covering 721-730 (LPGDAGREGF) has biased composition (low complexity). The segment covering 752 to 766 (DGSPGPIGLPGPDGP) has biased composition (pro residues). 5 stretches are compositionally biased toward low complexity: residues 769 to 778 (ERGLPGEVLG), 813 to 823 (MPGMPGLKGQP), 831 to 844 (QPGLYGPPGLHGFP), 1302 to 1328 (GSAALPGSKGDTGNPGAPGTPGTKGWA), and 1400 to 1421 (QPGTVGPQGRRGPPGAPGEMGP). In terms of domain architecture, Collagen IV NC1 spans 1489–1712 (GYLLVKHSQT…SRCQVCMKNL (224 aa)). Residue Tyr1490 is modified to 3'-bromotyrosine. 6 cysteine pairs are disulfide-bonded: Cys1504/Cys1593, Cys1537/Cys1590, Cys1549/Cys1555, Cys1612/Cys1708, Cys1646/Cys1705, and Cys1658/Cys1665.

Belongs to the type IV collagen family. In terms of assembly, there are six type IV collagen isoforms, alpha 1(IV)-alpha 6(IV), each of which can form a triple helix structure with 2 other chains to generate type IV collagen network. Interacts with EFEMP2. Post-translationally, prolines at the third position of the tripeptide repeating unit (G-X-Y) are hydroxylated in some or all of the chains. Type IV collagens contain numerous cysteine residues which are involved in inter- and intramolecular disulfide bonding. 12 of these, located in the NC1 domain, are conserved in all known type IV collagens. In terms of processing, the trimeric structure of the NC1 domains is stabilized by covalent bonds between Lys and Met residues. Post-translationally, proteolytic processing produces the C-terminal NC1 peptide, canstatin.

Its subcellular location is the secreted. It is found in the extracellular space. The protein resides in the extracellular matrix. It localises to the basement membrane. In terms of biological role, type IV collagen is the major structural component of glomerular basement membranes (GBM), forming a 'chicken-wire' meshwork together with laminins, proteoglycans and entactin/nidogen. Functionally, canstatin, a cleavage product corresponding to the collagen alpha 2(IV) NC1 domain, possesses both anti-angiogenic and anti-tumor cell activity. It inhibits proliferation and migration of endothelial cells, reduces mitochondrial membrane potential, and induces apoptosis. Specifically induces Fas-dependent apoptosis and activates procaspase-8 and -9 activity. Ligand for alphavbeta3 and alphavbeta5 integrins. This Homo sapiens (Human) protein is Collagen alpha-2(IV) chain.